We begin with the raw amino-acid sequence, 99 residues long: Integration host factor subunit alpha (99 aa).

The protein belongs to the bacterial histone-like protein family. Heterodimer of an alpha and a beta chain.

This protein is one of the two subunits of integration host factor, a specific DNA-binding protein that functions in genetic recombination as well as in transcriptional and translational control. The sequence is that of Integration host factor subunit alpha from Psychrobacter cryohalolentis (strain ATCC BAA-1226 / DSM 17306 / VKM B-2378 / K5).